The sequence spans 104 residues: UPF0134 protein MPN_104 (104 aa).

The protein belongs to the UPF0134 family.

In Mycoplasma pneumoniae (strain ATCC 29342 / M129 / Subtype 1) (Mycoplasmoides pneumoniae), this protein is UPF0134 protein MPN_104.